The primary structure comprises 191 residues: Photosystem I assembly protein Ycf4 (191 aa).

A run of 2 helical transmembrane segments spans residues 34-54 and 68-88; these read VASM…SSYF and IFVP…LLAI.

The protein belongs to the Ycf4 family.

The protein resides in the cellular thylakoid membrane. Functionally, seems to be required for the assembly of the photosystem I complex. The polypeptide is Photosystem I assembly protein Ycf4 (Prochlorococcus marinus (strain NATL1A)).